The following is a 500-amino-acid chain: NAD(P)H-quinone oxidoreductase chain 4, chloroplastic (500 aa).

Helical transmembrane passes span 4-24, 37-57, 87-107, 113-130, 134-154, 167-187, 208-228, 242-262, 272-292, 305-325, 330-350, 386-406, 416-436, and 462-482; these read FPWL…IFFL, IFIC…HFQL, IGPI…AWPV, LFHF…GSFS, LLLF…LLSM, FILY…GIGL, ALEI…SPII, HYST…YGLV, AHSI…IYAA, IAYS…SITD, GAIL…FLAG, LALP…GIIT, ILIT…SLSM, and LFVL…PDFV.

Belongs to the complex I subunit 4 family.

It localises to the plastid. The protein localises to the chloroplast thylakoid membrane. The catalysed reaction is a plastoquinone + NADH + (n+1) H(+)(in) = a plastoquinol + NAD(+) + n H(+)(out). The enzyme catalyses a plastoquinone + NADPH + (n+1) H(+)(in) = a plastoquinol + NADP(+) + n H(+)(out). The protein is NAD(P)H-quinone oxidoreductase chain 4, chloroplastic of Vitis vinifera (Grape).